The sequence spans 338 residues: Phenylalanine--tRNA ligase alpha subunit (338 aa).

Glutamate 252 contacts Mg(2+).

The protein belongs to the class-II aminoacyl-tRNA synthetase family. Phe-tRNA synthetase alpha subunit type 1 subfamily. Tetramer of two alpha and two beta subunits. It depends on Mg(2+) as a cofactor.

The protein resides in the cytoplasm. It catalyses the reaction tRNA(Phe) + L-phenylalanine + ATP = L-phenylalanyl-tRNA(Phe) + AMP + diphosphate + H(+). The chain is Phenylalanine--tRNA ligase alpha subunit from Fusobacterium nucleatum subsp. nucleatum (strain ATCC 25586 / DSM 15643 / BCRC 10681 / CIP 101130 / JCM 8532 / KCTC 2640 / LMG 13131 / VPI 4355).